Consider the following 425-residue polypeptide: L-cysteine:1D-myo-inositol 2-amino-2-deoxy-alpha-D-glucopyranoside ligase (425 aa).

Zn(2+) is bound at residue cysteine 43. L-cysteinyl-5'-AMP is bound by residues 43 to 46 (CGIT), serine 58, and 81 to 83 (NVT). The 'HIGH' region motif lies at 45-55 (ITPYDATHMGH). The short motif at 199–204 (ERGGDP) is the 'ERGGDP' region element. Residue tryptophan 240 participates in L-cysteinyl-5'-AMP binding. Cysteine 244 serves as a coordination point for Zn(2+). L-cysteinyl-5'-AMP is bound at residue 262–264 (GSD). A Zn(2+)-binding site is contributed by histidine 269. An L-cysteinyl-5'-AMP-binding site is contributed by valine 295. The short motif at 301–305 (KMSKS) is the 'KMSKS' region element.

This sequence belongs to the class-I aminoacyl-tRNA synthetase family. MshC subfamily. Monomer. It depends on Zn(2+) as a cofactor.

It carries out the reaction 1D-myo-inositol 2-amino-2-deoxy-alpha-D-glucopyranoside + L-cysteine + ATP = 1D-myo-inositol 2-(L-cysteinylamino)-2-deoxy-alpha-D-glucopyranoside + AMP + diphosphate + H(+). Functionally, catalyzes the ATP-dependent condensation of GlcN-Ins and L-cysteine to form L-Cys-GlcN-Ins. The polypeptide is L-cysteine:1D-myo-inositol 2-amino-2-deoxy-alpha-D-glucopyranoside ligase (Paenarthrobacter aurescens (strain TC1)).